The sequence spans 542 residues: Tubby-related protein 1 (542 aa).

Positions 1–289 (MPLRDETLRE…RAPSPPVEVD (289 aa)) are disordered. Residues 91–104 (FLRDPEAKKRDPRE) are compositionally biased toward basic and acidic residues. A compositionally biased stretch (acidic residues) spans 114–132 (AEDEEEEEEEDEEDEEEEA). Residues 146 to 157 (PLREKSSADLKE) show a composition bias toward basic and acidic residues. The segment covering 262–275 (SNQKGKAKGKGKKK) has biased composition (basic residues).

Belongs to the TUB family. As to quaternary structure, homodimer. May interact with ABCF1, PSIP1, ZEB1 and HMGB2 (Potential). Interacts with DNM1. Interacts with F-actin. Interacts with TUB. Interacts with TYRO3. Retina-specific.

The protein resides in the cytoplasm. It localises to the cell membrane. The protein localises to the secreted. It is found in the synapse. In terms of biological role, required for normal development of photoreceptor synapses. Required for normal photoreceptor function and for long-term survival of photoreceptor cells. Interacts with cytoskeleton proteins and may play a role in protein transport in photoreceptor cells. Binds lipids, especially phosphatidylinositol 3-phosphate, phosphatidylinositol 4-phosphate, phosphatidylinositol 5-phosphate, phosphatidylinositol 3,4-bisphosphate, phosphatidylinositol 4,5-bisphosphate, phosphatidylinositol 3,4,5-bisphosphate, phosphatidylserine and phosphatidic acid (in vitro). Contribute to stimulation of phagocytosis of apoptotic retinal pigment epithelium (RPE) cells and macrophages. This chain is Tubby-related protein 1 (TULP1), found in Homo sapiens (Human).